We begin with the raw amino-acid sequence, 77 residues long: Conotoxin ArMKLT2-0122 (77 aa).

The first 22 residues, 1–22 (MKLTCVLIVAVLFLTACQLIAA), serve as a signal peptide directing secretion. The propeptide occupies 23–44 (DDSRDLKRFSRRKMRDGMLNTK). 3 disulfides stabilise this stretch: Cys50–Cys65, Cys57–Cys68, and Cys64–Cys73.

The protein belongs to the conotoxin O1 superfamily. Expressed by the venom duct.

It is found in the secreted. The sequence is that of Conotoxin ArMKLT2-0122 from Conus arenatus (Sand-dusted cone).